A 612-amino-acid chain; its full sequence is Dihydroxy-acid dehydratase (612 aa).

Residue aspartate 81 participates in Mg(2+) binding. Cysteine 122 is a binding site for [2Fe-2S] cluster. Aspartate 123 and lysine 124 together coordinate Mg(2+). Lysine 124 is modified (N6-carboxylysine). Cysteine 196 contacts [2Fe-2S] cluster. Glutamate 492 lines the Mg(2+) pocket. Catalysis depends on serine 518, which acts as the Proton acceptor.

This sequence belongs to the IlvD/Edd family. In terms of assembly, homodimer. The cofactor is [2Fe-2S] cluster. It depends on Mg(2+) as a cofactor.

The enzyme catalyses (2R)-2,3-dihydroxy-3-methylbutanoate = 3-methyl-2-oxobutanoate + H2O. The catalysed reaction is (2R,3R)-2,3-dihydroxy-3-methylpentanoate = (S)-3-methyl-2-oxopentanoate + H2O. Its pathway is amino-acid biosynthesis; L-isoleucine biosynthesis; L-isoleucine from 2-oxobutanoate: step 3/4. It functions in the pathway amino-acid biosynthesis; L-valine biosynthesis; L-valine from pyruvate: step 3/4. In terms of biological role, functions in the biosynthesis of branched-chain amino acids. Catalyzes the dehydration of (2R,3R)-2,3-dihydroxy-3-methylpentanoate (2,3-dihydroxy-3-methylvalerate) into 2-oxo-3-methylpentanoate (2-oxo-3-methylvalerate) and of (2R)-2,3-dihydroxy-3-methylbutanoate (2,3-dihydroxyisovalerate) into 2-oxo-3-methylbutanoate (2-oxoisovalerate), the penultimate precursor to L-isoleucine and L-valine, respectively. This is Dihydroxy-acid dehydratase from Cereibacter sphaeroides (strain ATCC 17029 / ATH 2.4.9) (Rhodobacter sphaeroides).